A 400-amino-acid polypeptide reads, in one-letter code: S-adenosylmethionine sensor upstream of mTORC1 (400 aa).

Residues arginine 99, glycine 168, aspartate 186, aspartate 198, phenylalanine 199, and serine 240 each contribute to the S-adenosyl-L-methionine site.

This sequence belongs to the BMT2/SAMTOR family. In terms of assembly, interacts with the GATOR1 complex; interaction is disrupted when samtor binds S-adenosyl-L-methionine. Interacts with the KICSTOR complex; interaction is disrupted when samtor binds S-adenosyl-L-methionine.

In terms of biological role, S-adenosyl-L-methionine-binding protein that acts as an inhibitor of mTORC1 signaling via interaction with the GATOR1 and KICSTOR complexes. Acts as a sensor of S-adenosyl-L-methionine to signal methionine sufficiency to mTORC1: in presence of methionine, binds S-adenosyl-L-methionine, leading to disrupt interaction with the GATOR1 and KICSTOR complexes and promote mTORC1 signaling. Upon methionine starvation, S-adenosyl-L-methionine levels are reduced, thereby promoting the association with GATOR1 and KICSTOR, leading to inhibit mTORC1 signaling. Probably also acts as a S-adenosyl-L-methionine-dependent methyltransferase. The polypeptide is S-adenosylmethionine sensor upstream of mTORC1 (Xenopus laevis (African clawed frog)).